We begin with the raw amino-acid sequence, 511 residues long: Alpha-amylase 2B (511 aa).

Residues 1 to 15 form the signal peptide; the sequence is MKFFLLLFTIGFCWA. Position 16 is a pyrrolidone carboxylic acid (Gln-16). Cystine bridges form between Cys-43–Cys-101, Cys-85–Cys-130, and Cys-156–Cys-175. Ca(2+) contacts are provided by Asn-115, Arg-173, and Asp-182. Arg-210 lines the chloride pocket. Residue Asp-212 is the Nucleophile of the active site. His-216 provides a ligand contact to Ca(2+). Glu-248 serves as the catalytic Proton donor. 2 residues coordinate chloride: Asn-313 and Arg-352. Intrachain disulfides connect Cys-393–Cys-399 and Cys-465–Cys-477.

Belongs to the glycosyl hydrolase 13 family. As to quaternary structure, monomer. Ca(2+) is required as a cofactor. The cofactor is chloride.

It localises to the secreted. It carries out the reaction Endohydrolysis of (1-&gt;4)-alpha-D-glucosidic linkages in polysaccharides containing three or more (1-&gt;4)-alpha-linked D-glucose units.. The sequence is that of Alpha-amylase 2B (AMY2B) from Homo sapiens (Human).